A 364-amino-acid chain; its full sequence is Mannose-1-phosphate guanyltransferase (364 aa).

The protein belongs to the transferase hexapeptide repeat family.

Its subcellular location is the cytoplasm. The catalysed reaction is alpha-D-mannose 1-phosphate + GTP + H(+) = GDP-alpha-D-mannose + diphosphate. It functions in the pathway nucleotide-sugar biosynthesis; GDP-alpha-D-mannose biosynthesis; GDP-alpha-D-mannose from alpha-D-mannose 1-phosphate (GTP route): step 1/1. Functionally, involved in cell wall synthesis where it is required for glycosylation. Involved in cell cycle progression through cell-size checkpoint. In Aspergillus fumigatus (strain ATCC MYA-4609 / CBS 101355 / FGSC A1100 / Af293) (Neosartorya fumigata), this protein is Mannose-1-phosphate guanyltransferase (mpg1).